Reading from the N-terminus, the 226-residue chain is Probable GPI-anchored adhesin-like protein PGA28 (226 aa).

A signal peptide spans 1 to 26 (MKFFAYFAVIALSSASLINLFKRATA). The interval 119-209 (DTEATTGSDT…SQQTSSHAGG (91 aa)) is disordered. Positions 131 to 148 (KAATGATTSAGTGVTKTS) are enriched in low complexity. Positions 149–160 (ETGGVSSTANSE) are enriched in polar residues. The segment covering 161–208 (AKSGSVTTSKSGSTSISESKTTSGSSSSGKSSSSTSSASSQQTSSHAG) has biased composition (low complexity). A lipid anchor (GPI-anchor amidated serine) is attached at serine 197. Residues 198-226 (ASSQQTSSHAGGASGAFVSLLGLFAALLI) constitute a propeptide, removed in mature form.

Predicted to be a cleavage substrate for KEX2.

The protein resides in the cell membrane. Its function is as follows. Putative adhesin which is involved in cell adhesion and virulence. Plays a role in Candida-bacterial interactions and subsequent regulation of filamentation. The chain is Probable GPI-anchored adhesin-like protein PGA28 (PGA28) from Candida albicans (strain SC5314 / ATCC MYA-2876) (Yeast).